The following is a 466-amino-acid chain: Uronate isomerase (466 aa).

This sequence belongs to the metallo-dependent hydrolases superfamily. Uronate isomerase family.

The catalysed reaction is D-glucuronate = D-fructuronate. It catalyses the reaction aldehydo-D-galacturonate = keto-D-tagaturonate. It participates in carbohydrate metabolism; pentose and glucuronate interconversion. The polypeptide is Uronate isomerase (Streptococcus agalactiae serotype III (strain NEM316)).